Reading from the N-terminus, the 195-residue chain is Small ribosomal subunit protein uS10c (195 aa).

Residues 1 to 59 (MATSSISAALLSPLTLRNASSSSTKQDFSTLSSLNLRRTLTPTLQSGHTLSNSSNFATF) constitute a chloroplast transit peptide.

Belongs to the universal ribosomal protein uS10 family. Component of the chloroplast small ribosomal subunit (SSU). Mature 70S chloroplast ribosomes of higher plants consist of a small (30S) and a large (50S) subunit. The 30S small subunit contains 1 molecule of ribosomal RNA (16S rRNA) and 24 different proteins. The 50S large subunit contains 3 rRNA molecules (23S, 5S and 4.5S rRNA) and 33 different proteins.

Its subcellular location is the plastid. The protein resides in the chloroplast. Functionally, component of the chloroplast ribosome (chloro-ribosome), a dedicated translation machinery responsible for the synthesis of chloroplast genome-encoded proteins, including proteins of the transcription and translation machinery and components of the photosynthetic apparatus. This is Small ribosomal subunit protein uS10c (RPS10) from Spinacia oleracea (Spinach).